Here is a 230-residue protein sequence, read N- to C-terminus: 6-carboxyhexanoate--CoA ligase (230 aa).

This sequence belongs to the BioW family. As to quaternary structure, homodimer. Requires Mg(2+) as cofactor.

It catalyses the reaction heptanedioate + ATP + CoA = 6-carboxyhexanoyl-CoA + AMP + diphosphate. It functions in the pathway metabolic intermediate metabolism; pimeloyl-CoA biosynthesis; pimeloyl-CoA from pimelate: step 1/1. Its function is as follows. Catalyzes the transformation of pimelate into pimeloyl-CoA with concomitant hydrolysis of ATP to AMP. The chain is 6-carboxyhexanoate--CoA ligase from Staphylococcus aureus (strain MSSA476).